A 248-amino-acid polypeptide reads, in one-letter code: PF03932 family protein CutC (248 aa).

The protein belongs to the CutC family. In terms of assembly, homodimer.

It localises to the cytoplasm. The protein is PF03932 family protein CutC of Salmonella newport (strain SL254).